Reading from the N-terminus, the 426-residue chain is Putative F-box protein At4g38870 (426 aa).

The 46-residue stretch at 47 to 92 (SVNSELLPVDLIMEILKKLSLKPLIRFLCVSKLWASIIRDPYFMKL) folds into the F-box domain.

The polypeptide is Putative F-box protein At4g38870 (Arabidopsis thaliana (Mouse-ear cress)).